A 203-amino-acid polypeptide reads, in one-letter code: Na(+)-translocating NADH-quinone reductase subunit E (203 aa).

6 helical membrane passes run 11-31 (SIFIENMALSFFLGMCTFLAV), 35-55 (ISTAIGLGTAVIVVQTLTVPL), 82-102 (FLGLIAYIGVIAAVVQILEMF), 115-135 (GIFLPLITVNCAILAGSLFMV), 145-165 (MVYGVGSGVGWALAIAVMAGV), and 181-201 (LGITFITAGLMAIGFMSFSGI).

This sequence belongs to the NqrDE/RnfAE family. In terms of assembly, composed of six subunits; NqrA, NqrB, NqrC, NqrD, NqrE and NqrF.

The protein localises to the cell inner membrane. It carries out the reaction a ubiquinone + n Na(+)(in) + NADH + H(+) = a ubiquinol + n Na(+)(out) + NAD(+). NQR complex catalyzes the reduction of ubiquinone-1 to ubiquinol by two successive reactions, coupled with the transport of Na(+) ions from the cytoplasm to the periplasm. NqrA to NqrE are probably involved in the second step, the conversion of ubisemiquinone to ubiquinol. The sequence is that of Na(+)-translocating NADH-quinone reductase subunit E from Dichelobacter nodosus (strain VCS1703A).